Consider the following 556-residue polypeptide: Glutamine--tRNA ligase (556 aa).

The short motif at 35-45 is the 'HIGH' region element; that stretch reads PEPNGYLHIGH. ATP is bound by residues 36–38 and 42–48; these read EPN and HIGHAKS. Positions 68 and 213 each coordinate L-glutamine. ATP contacts are provided by residues T232 and 262-263; that span reads RL. Residues 269 to 273 carry the 'KMSKS' region motif; that stretch reads VTSKR.

Belongs to the class-I aminoacyl-tRNA synthetase family. As to quaternary structure, monomer.

It localises to the cytoplasm. It catalyses the reaction tRNA(Gln) + L-glutamine + ATP = L-glutaminyl-tRNA(Gln) + AMP + diphosphate. In Pseudomonas aeruginosa (strain LESB58), this protein is Glutamine--tRNA ligase.